Reading from the N-terminus, the 259-residue chain is Protein POLYCHOME (259 aa).

Positions 236 to 259 are disordered; it reads KMKSTPSAKRAEREKRVRTLMSMR.

As to quaternary structure, interacts with APC/C activators such as APC5, FZR2, FZR3, CDC20.1 and CDC20.5. Expressed mainly in actively dividing cells (e.g. central cylinder of the root tip, young leaves and vascular tissues).

The protein localises to the nucleus. Functionally, negative regulator of the anaphase-promoting complex/cyclosome (APC/C) ubiquitin ligase required for proper mitotic progression and cell fate determination; inhibits premature cell differentiation. Prevents DNA endoreplication by promoting the maintenance of the mitotic state by preferentially inhibiting APC/C(FZR) and triggering cyclins accumulation (e.g. CYCB1-1, CYCB1-2 and CYCA2-3) in a temporal manner. Required for megagametophyte and endosperm development. Counteracts the activity of CCS52A1 thus inhibiting the turnover of CYCA2-3. Confers immunity to bacterial pathogens (e.g. Pseudomonas syringae pv. tomato DC3000), which is associated with increased expression of disease resistance (R) genes. This chain is Protein POLYCHOME (PYM), found in Arabidopsis thaliana (Mouse-ear cress).